The chain runs to 327 residues: o-succinylbenzoate synthase (327 aa).

The Proton donor role is filled by K110. The Mg(2+) site is built by D138, E165, and D188. Residue K212 is the Proton acceptor of the active site.

Belongs to the mandelate racemase/muconate lactonizing enzyme family. MenC type 1 subfamily. It depends on a divalent metal cation as a cofactor.

It carries out the reaction (1R,6R)-6-hydroxy-2-succinyl-cyclohexa-2,4-diene-1-carboxylate = 2-succinylbenzoate + H2O. The protein operates within quinol/quinone metabolism; 1,4-dihydroxy-2-naphthoate biosynthesis; 1,4-dihydroxy-2-naphthoate from chorismate: step 4/7. Its pathway is quinol/quinone metabolism; menaquinone biosynthesis. Functionally, converts 2-succinyl-6-hydroxy-2,4-cyclohexadiene-1-carboxylate (SHCHC) to 2-succinylbenzoate (OSB). This Mycobacterium marinum (strain ATCC BAA-535 / M) protein is o-succinylbenzoate synthase.